Here is a 153-residue protein sequence, read N- to C-terminus: Probable phospholipase A2 homolog 2 (153 aa).

The signal sequence occupies residues 1-25 (MRFFLKLAPRCSVLLLLLLVTASRG). 6 cysteine pairs are disulfide-bonded: Cys42–Cys70, Cys46–Cys76, Cys51–Cys123, Cys63–Cys83, Cys82–Cys109, and Cys89–Cys102. The Ca(2+) site is built by Tyr62, Gly64, and Tyr67. His86 is an active-site residue. Asp87 is a Ca(2+) binding site.

The protein belongs to the phospholipase A2 family. It depends on Ca(2+) as a cofactor.

It is found in the secreted. It catalyses the reaction a 1,2-diacyl-sn-glycero-3-phosphocholine + H2O = a 1-acyl-sn-glycero-3-phosphocholine + a fatty acid + H(+). Its function is as follows. PA2 catalyzes the calcium-dependent hydrolysis of the 2-acyl groups in 3-sn-phosphoglycerides. Releases lysophospholipids (LPLs) and free fatty acids (FFAs) from membrane phospholipids in response to hormones and other external stimuli. The sequence is that of Probable phospholipase A2 homolog 2 (PLA2-II) from Oryza sativa subsp. japonica (Rice).